A 131-amino-acid chain; its full sequence is MPLKLSLKPGEKFVLNGAVVQNGDRRGVLVLQNKASVLREKDIMQLDEATTPARRIYFPVMMMYLDEANAERQYEEFATRLTEFMGVVRNPDVLTDCIAISKHVMAREHYKALMLSRKLIEYEDQRLGHVS.

This sequence belongs to the FlbT family.

Its function is as follows. Has a post-transcriptional repressor function in flagellum biogenesis. Associates with the 5'-UTR of fljK mRNA and promotes its degradation. This chain is Probable flagellum biosynthesis repressor protein FlbT, found in Caulobacter sp. (strain K31).